A 157-amino-acid chain; its full sequence is Transcriptional repressor NrdR (157 aa).

Residues 3–34 fold into a zinc finger; sequence CPFCRHPDSRVIDSRTSDDGLSIRRRRQCPEC. The ATP-cone domain maps to 46 to 136; it reads LSVIKRSGVV…VYQAFDSLED (91 aa).

The protein belongs to the NrdR family. Zn(2+) is required as a cofactor.

Negatively regulates transcription of bacterial ribonucleotide reductase nrd genes and operons by binding to NrdR-boxes. The protein is Transcriptional repressor NrdR of Leifsonia xyli subsp. xyli (strain CTCB07).